Here is a 467-residue protein sequence, read N- to C-terminus: E3 ubiquitin-protein ligase TRIM11 (467 aa).

The segment at 16–57 (CAICLDYFTDPVMTDCGHNFCRECIRRCWGQPEGPYACPECR) adopts an RING-type zinc-finger fold. S85 is subject to Phosphoserine. The B box-type zinc-finger motif lies at 87-127 (VPQGVCAAHREPLTTFCGDDLSLLCPTCERSEHWAHRVRPL). Residues C92, H95, C114, and H119 each coordinate Zn(2+). Residues 127–207 (LQEAADDLKG…KLEEEELEVL (81 aa)) adopt a coiled-coil conformation. Residues 267 to 460 (ELRTVCRVPG…MTICRLIGVS (194 aa)) enclose the B30.2/SPRY domain. Residues 304–313 (DRRSVQRGEQ) are compositionally biased toward basic and acidic residues. The interval 304–325 (DRRSVQRGEQRQALPDSPERFD) is disordered.

It belongs to the TRIM/RBCC family. In terms of assembly, binds cytoplasmic tail of integrin alpha-1. Interacts with the HN peptide. Interacts with PHOX2B. Interacts (when autoubiquitinated) with SQSTM1/p62; promoting AIM2 recruitment to autophagosomes. Interacts with AIM2; promoting its autophagy-dependent degradation. Post-translationally, autoubiquitinated upon DNA stimulation; autoubiquitination promotes interaction with SQSTM1/p62 and recruitment of AIM2 to autophagosomes.

Its subcellular location is the cytoplasm. It is found in the nucleus. It catalyses the reaction S-ubiquitinyl-[E2 ubiquitin-conjugating enzyme]-L-cysteine + [acceptor protein]-L-lysine = [E2 ubiquitin-conjugating enzyme]-L-cysteine + N(6)-ubiquitinyl-[acceptor protein]-L-lysine.. It functions in the pathway protein modification; protein ubiquitination. In terms of biological role, E3 ubiquitin-protein ligase that promotes the degradation of insoluble ubiquitinated proteins, including insoluble PAX6, poly-Gln repeat expanded HTT and poly-Ala repeat expanded ARX. Mediates PAX6 ubiquitination leading to proteasomal degradation, thereby modulating cortical neurogenesis. May also inhibit PAX6 transcriptional activity, possibly in part by preventing the binding of PAX6 to its consensus sequences. May contribute to the regulation of the intracellular level of HN (humanin) or HN-containing proteins through the proteasomal degradation pathway. Mediates MED15 ubiquitination leading to proteasomal degradation. May contribute to the innate restriction of retroviruses. Upon overexpression, reduces HIV-1 and murine leukemia virus infectivity, by suppressing viral gene expression. Antiviral activity depends on a functional E3 ubiquitin-protein ligase domain. May regulate TRIM5 turnover via the proteasome pathway, thus counteracting the TRIM5-mediated cross-species restriction of retroviral infection at early stages of the retroviral life cycle. Acts as an inhibitor of the AIM2 inflammasome by promoting autophagy-dependent degradation of AIM2. Mechanistically, undergoes autoubiquitination upon DNA stimulation, promoting interaction with AIM2 and SQSTM1/p62, leading to AIM2 recruitment to autophagosomes. This chain is E3 ubiquitin-protein ligase TRIM11 (Trim11), found in Rattus norvegicus (Rat).